The chain runs to 228 residues: 5'-methylthioadenosine/S-adenosylhomocysteine nucleosidase (228 aa).

E11 (proton acceptor) is an active-site residue. Substrate is bound by residues G77, I151, and 172–173 (ME). D196 serves as the catalytic Proton donor.

The protein belongs to the PNP/UDP phosphorylase family. MtnN subfamily.

The enzyme catalyses S-adenosyl-L-homocysteine + H2O = S-(5-deoxy-D-ribos-5-yl)-L-homocysteine + adenine. The catalysed reaction is S-methyl-5'-thioadenosine + H2O = 5-(methylsulfanyl)-D-ribose + adenine. It carries out the reaction 5'-deoxyadenosine + H2O = 5-deoxy-D-ribose + adenine. It functions in the pathway amino-acid biosynthesis; L-methionine biosynthesis via salvage pathway; S-methyl-5-thio-alpha-D-ribose 1-phosphate from S-methyl-5'-thioadenosine (hydrolase route): step 1/2. Its function is as follows. Catalyzes the irreversible cleavage of the glycosidic bond in both 5'-methylthioadenosine (MTA) and S-adenosylhomocysteine (SAH/AdoHcy) to adenine and the corresponding thioribose, 5'-methylthioribose and S-ribosylhomocysteine, respectively. Also cleaves 5'-deoxyadenosine, a toxic by-product of radical S-adenosylmethionine (SAM) enzymes, into 5-deoxyribose and adenine. The protein is 5'-methylthioadenosine/S-adenosylhomocysteine nucleosidase of Staphylococcus aureus (strain bovine RF122 / ET3-1).